A 479-amino-acid polypeptide reads, in one-letter code: Glycogen synthase (479 aa).

Position 15 (lysine 15) interacts with ADP-alpha-D-glucose.

It belongs to the glycosyltransferase 1 family. Bacterial/plant glycogen synthase subfamily.

It carries out the reaction [(1-&gt;4)-alpha-D-glucosyl](n) + ADP-alpha-D-glucose = [(1-&gt;4)-alpha-D-glucosyl](n+1) + ADP + H(+). Its pathway is glycan biosynthesis; glycogen biosynthesis. In terms of biological role, synthesizes alpha-1,4-glucan chains using ADP-glucose. The protein is Glycogen synthase of Pectobacterium carotovorum subsp. carotovorum (strain PC1).